Here is an 86-residue protein sequence, read N- to C-terminus: Putative sodium channel toxin Ts17 (86 aa).

Positions 1-19 (MNYFIFLVVACLLTAGTEG) are cleaved as a signal peptide. The LCN-type CS-alpha/beta domain maps to 21-82 (KDGYPVEGDN…EPTKTSGRCK (62 aa)). 4 disulfide bridges follow: Cys31/Cys81, Cys35/Cys57, Cys43/Cys64, and Cys47/Cys66. Residue Pro83 is modified to Proline amide.

Belongs to the long (4 C-C) scorpion toxin superfamily. Sodium channel inhibitor family. Alpha subfamily. As to expression, expressed by the venom gland.

It is found in the secreted. In terms of biological role, alpha toxins bind voltage-independently at site-3 of sodium channels (Nav) and inhibit the inactivation of the activated channels, thereby blocking neuronal transmission. The protein is Putative sodium channel toxin Ts17 of Tityus serrulatus (Brazilian scorpion).